The following is a 590-amino-acid chain: Arginine--tRNA ligase (590 aa).

Residues 131-141 (PNIAKEMHVGH) carry the 'HIGH' region motif.

It belongs to the class-I aminoacyl-tRNA synthetase family. In terms of assembly, monomer.

It localises to the cytoplasm. It carries out the reaction tRNA(Arg) + L-arginine + ATP = L-arginyl-tRNA(Arg) + AMP + diphosphate. This chain is Arginine--tRNA ligase, found in Synechococcus sp. (strain RCC307).